Reading from the N-terminus, the 123-residue chain is Small ribosomal subunit protein uS12 (123 aa).

The interval 1–22 (MATINQLVRQPRKRSVEKSDVP) is disordered. D89 is subject to 3-methylthioaspartic acid. A disordered region spans residues 100–123 (GSLDTSGVKGRNQGRSKYGTKRPK). Basic residues predominate over residues 111–123 (NQGRSKYGTKRPK).

It belongs to the universal ribosomal protein uS12 family. Part of the 30S ribosomal subunit. Contacts proteins S8 and S17. May interact with IF1 in the 30S initiation complex.

Its function is as follows. With S4 and S5 plays an important role in translational accuracy. Functionally, interacts with and stabilizes bases of the 16S rRNA that are involved in tRNA selection in the A site and with the mRNA backbone. Located at the interface of the 30S and 50S subunits, it traverses the body of the 30S subunit contacting proteins on the other side and probably holding the rRNA structure together. The combined cluster of proteins S8, S12 and S17 appears to hold together the shoulder and platform of the 30S subunit. In Pseudomonas entomophila (strain L48), this protein is Small ribosomal subunit protein uS12.